Here is a 383-residue protein sequence, read N- to C-terminus: Succinyl-diaminopimelate desuccinylase (383 aa).

H72 is a binding site for Zn(2+). D74 is an active-site residue. D105 contributes to the Zn(2+) binding site. E137 serves as the catalytic Proton acceptor. The Zn(2+) site is built by E138, E167, and H352.

This sequence belongs to the peptidase M20A family. DapE subfamily. In terms of assembly, homodimer. Zn(2+) serves as cofactor. The cofactor is Co(2+).

The enzyme catalyses N-succinyl-(2S,6S)-2,6-diaminopimelate + H2O = (2S,6S)-2,6-diaminopimelate + succinate. The protein operates within amino-acid biosynthesis; L-lysine biosynthesis via DAP pathway; LL-2,6-diaminopimelate from (S)-tetrahydrodipicolinate (succinylase route): step 3/3. Its function is as follows. Catalyzes the hydrolysis of N-succinyl-L,L-diaminopimelic acid (SDAP), forming succinate and LL-2,6-diaminopimelate (DAP), an intermediate involved in the bacterial biosynthesis of lysine and meso-diaminopimelic acid, an essential component of bacterial cell walls. The chain is Succinyl-diaminopimelate desuccinylase from Ehrlichia ruminantium (strain Gardel).